Consider the following 231-residue polypeptide: Probable septum site-determining protein MinC (231 aa).

Belongs to the MinC family. Interacts with MinD and FtsZ.

Its function is as follows. Cell division inhibitor that blocks the formation of polar Z ring septums. Rapidly oscillates between the poles of the cell to destabilize FtsZ filaments that have formed before they mature into polar Z rings. Prevents FtsZ polymerization. This is Probable septum site-determining protein MinC from Baumannia cicadellinicola subsp. Homalodisca coagulata.